The sequence spans 389 residues: Tryptophan 2,3-dioxygenase (389 aa).

Substrate-binding positions include 60–64 (FIITH) and arginine 131. Histidine 316 contacts heme. Threonine 331 is a substrate binding site.

Belongs to the tryptophan 2,3-dioxygenase family. In terms of assembly, homotetramer. Dimer of dimers. Requires heme as cofactor.

It carries out the reaction L-tryptophan + O2 = N-formyl-L-kynurenine. The protein operates within amino-acid degradation; L-tryptophan degradation via kynurenine pathway; L-kynurenine from L-tryptophan: step 1/2. It functions in the pathway pigment biosynthesis; ommochrome biosynthesis. Functionally, heme-dependent dioxygenase that catalyzes the oxidative cleavage of the L-tryptophan (L-Trp) pyrrole ring and converts L-tryptophan to N-formyl-L-kynurenine. Catalyzes the oxidative cleavage of the indole moiety. The sequence is that of Tryptophan 2,3-dioxygenase from Mayetiola destructor (Hessian fly).